The primary structure comprises 425 residues: Histidine--tRNA ligase (425 aa).

It belongs to the class-II aminoacyl-tRNA synthetase family. In terms of assembly, homodimer.

The protein resides in the cytoplasm. It catalyses the reaction tRNA(His) + L-histidine + ATP = L-histidyl-tRNA(His) + AMP + diphosphate + H(+). This is Histidine--tRNA ligase from Desulforapulum autotrophicum (strain ATCC 43914 / DSM 3382 / VKM B-1955 / HRM2) (Desulfobacterium autotrophicum).